We begin with the raw amino-acid sequence, 345 residues long: Heat-inducible transcription repressor HrcA (345 aa).

This sequence belongs to the HrcA family.

Its function is as follows. Negative regulator of class I heat shock genes (grpE-dnaK-dnaJ and groELS operons). Prevents heat-shock induction of these operons. The protein is Heat-inducible transcription repressor HrcA of Desulfitobacterium hafniense (strain DSM 10664 / DCB-2).